The primary structure comprises 181 residues: MSPMLQIAAEEMENPLIPPIPELVIGLIAFVIVFGFLAKKLLPNINKVLEERREAIEGGIEKAEAAQTEAQSVLEQYKAQLAEARHEGREEAQEQGATLIAEMRAEGQRQREEIIAAGHAQIQADRKAAASALRQDVGKLATELAGKLVGESLEDHARQSRVIDRFLDELDDKATTAEATR.

The helical transmembrane segment at 16–36 (LIPPIPELVIGLIAFVIVFGF) threads the bilayer.

It belongs to the ATPase B chain family. As to quaternary structure, F-type ATPases have 2 components, F(1) - the catalytic core - and F(0) - the membrane proton channel. F(1) has five subunits: alpha(3), beta(3), gamma(1), delta(1), epsilon(1). F(0) has three main subunits: a(1), b(2) and c(10-14). The alpha and beta chains form an alternating ring which encloses part of the gamma chain. F(1) is attached to F(0) by a central stalk formed by the gamma and epsilon chains, while a peripheral stalk is formed by the delta and b chains.

The protein resides in the cell membrane. Functionally, f(1)F(0) ATP synthase produces ATP from ADP in the presence of a proton or sodium gradient. F-type ATPases consist of two structural domains, F(1) containing the extramembraneous catalytic core and F(0) containing the membrane proton channel, linked together by a central stalk and a peripheral stalk. During catalysis, ATP synthesis in the catalytic domain of F(1) is coupled via a rotary mechanism of the central stalk subunits to proton translocation. Its function is as follows. Component of the F(0) channel, it forms part of the peripheral stalk, linking F(1) to F(0). The sequence is that of ATP synthase subunit b from Streptomyces lividans.